Here is a 460-residue protein sequence, read N- to C-terminus: Glutamyl-tRNA reductase (460 aa).

Substrate-binding positions include 48-51, Ser100, 105-107, and Gln111; these read TCNR and EDQ. The Nucleophile role is filled by Cys49. 180–185 lines the NADP(+) pocket; that stretch reads GAGEIG.

Belongs to the glutamyl-tRNA reductase family. As to quaternary structure, homodimer.

The enzyme catalyses (S)-4-amino-5-oxopentanoate + tRNA(Glu) + NADP(+) = L-glutamyl-tRNA(Glu) + NADPH + H(+). The protein operates within porphyrin-containing compound metabolism; protoporphyrin-IX biosynthesis; 5-aminolevulinate from L-glutamyl-tRNA(Glu): step 1/2. In terms of biological role, catalyzes the NADPH-dependent reduction of glutamyl-tRNA(Glu) to glutamate 1-semialdehyde (GSA). This Methanosarcina acetivorans (strain ATCC 35395 / DSM 2834 / JCM 12185 / C2A) protein is Glutamyl-tRNA reductase.